A 145-amino-acid polypeptide reads, in one-letter code: Large ribosomal subunit protein uL15 (145 aa).

A compositionally biased stretch (basic residues) spans 1–30 (MAHSLRKTRKLRGHVSHGHGRIGKHRKHPG). The interval 1–48 (MAHSLRKTRKLRGHVSHGHGRIGKHRKHPGGRGNAGGQHHHRINRDKY) is disordered.

Belongs to the universal ribosomal protein uL15 family. As to quaternary structure, component of the large ribosomal subunit.

It localises to the cytoplasm. It is found in the cytosol. Its subcellular location is the rough endoplasmic reticulum. Functionally, component of the large ribosomal subunit. In Oscheius tipulae, this protein is Large ribosomal subunit protein uL15 (rpl-27a).